The chain runs to 118 residues: Small ribosomal subunit protein uS13 (118 aa).

Residues Ser-94 to Lys-118 form a disordered region.

It belongs to the universal ribosomal protein uS13 family. As to quaternary structure, part of the 30S ribosomal subunit. Forms a loose heterodimer with protein S19. Forms two bridges to the 50S subunit in the 70S ribosome.

In terms of biological role, located at the top of the head of the 30S subunit, it contacts several helices of the 16S rRNA. In the 70S ribosome it contacts the 23S rRNA (bridge B1a) and protein L5 of the 50S subunit (bridge B1b), connecting the 2 subunits; these bridges are implicated in subunit movement. Contacts the tRNAs in the A and P-sites. The protein is Small ribosomal subunit protein uS13 of Pseudoalteromonas atlantica (strain T6c / ATCC BAA-1087).